Consider the following 816-residue polypeptide: Phosphatidylinositol 4-kinase beta (816 aa).

3 disordered regions span residues 1–30, 101–120, and 248–318; these read MGDT…GSLL, EDEM…RRRR, and AHRK…SFSS. G2 carries the post-translational modification N-acetylglycine. The tract at residues 2-68 is interaction with ACBD3; it reads GDTVVEPAPL…VKLLHGGMAV (67 aa). The region spanning 52 to 242 is the PIK helical domain; it reads CQDVLEKVKL…GTKLRKLILS (191 aa). The residue at position 258 (S258) is a Phosphoserine. T263 is modified (phosphothreonine). S266, S275, S277, S284, and S294 each carry phosphoserine. 2 stretches are compositionally biased toward polar residues: residues 278 to 297 and 306 to 318; these read DATA…SNPK and SSST…SFSS. Position 428 is a phosphoserine (S428). Phosphothreonine is present on T438. Position 511 is a phosphoserine (S511). A phosphothreonine mark is found at T517 and T519. The region spanning 535-801 is the PI3K/PI4K catalytic domain; the sequence is EPWQEKVRRI…MVDGSMRSIT (267 aa). The segment at 541–547 is G-loop; the sequence is VRRIREG. Residues 668–676 form a catalytic loop region; sequence QVKDRHNGN. The interval 687 to 711 is activation loop; that stretch reads HIDFGFILSSSPRNLGFETSAFKLT.

It belongs to the PI3/PI4-kinase family. Type III PI4K subfamily. As to quaternary structure, interacts with ARF1 and ARF3 in the Golgi complex, but not with ARF4, ARF5 or ARF6. Interacts with NCS1/FREQ in a calcium-independent manner. Interacts with CALN1/CABP8 and CALN2/CABP7; in a calcium-dependent manner; this interaction competes with NCS1/FREQ binding. Interacts with ACBD3. Interacts with ARMH3, YWHAB, YWHAE, YWHAG, YWHAH, YWHAQ, YWHAZ and SFN. Interacts with GGA2 (via VHS domain); the interaction is important for PI4KB location at the Golgi apparatus membrane. Interacts with ATG9A. Mg(2+) is required as a cofactor. Mn(2+) serves as cofactor.

The protein localises to the endomembrane system. The protein resides in the mitochondrion outer membrane. It localises to the rough endoplasmic reticulum membrane. It is found in the golgi apparatus. Its subcellular location is the golgi apparatus membrane. The catalysed reaction is a 1,2-diacyl-sn-glycero-3-phospho-(1D-myo-inositol) + ATP = a 1,2-diacyl-sn-glycero-3-phospho-(1D-myo-inositol 4-phosphate) + ADP + H(+). With respect to regulation, inhibited by wortmannin. Increased kinase activity upon interaction with NCS1/FREQ. Phosphorylates phosphatidylinositol (PI) in the first committed step in the production of the second messenger inositol-1,4,5,-trisphosphate (PIP). May regulate Golgi disintegration/reorganization during mitosis, possibly via its phosphorylation. Involved in Golgi-to-plasma membrane trafficking. The polypeptide is Phosphatidylinositol 4-kinase beta (PI4KB) (Plecturocebus moloch (Dusky titi monkey)).